A 218-amino-acid chain; its full sequence is Thiopurine S-methyltransferase (218 aa).

4 residues coordinate S-adenosyl-L-methionine: tryptophan 10, leucine 45, glutamate 66, and arginine 123.

Belongs to the class I-like SAM-binding methyltransferase superfamily. TPMT family.

The protein resides in the cytoplasm. The enzyme catalyses S-adenosyl-L-methionine + a thiopurine = S-adenosyl-L-homocysteine + a thiopurine S-methylether.. The chain is Thiopurine S-methyltransferase from Shewanella baltica (strain OS223).